The chain runs to 469 residues: Ribonuclease Y (469 aa).

The chain crosses the membrane as a helical span at residues 6-26 (VTLILVGVIIFLFISLFFYVI). The KH domain occupies 149–209 (FSFTIKLENE…IRREKAKRTM (61 aa)). The region spanning 276 to 369 (VLLHCVEAAV…VKVVDKLSAS (94 aa)) is the HD domain.

It belongs to the RNase Y family.

It is found in the cell membrane. Endoribonuclease that initiates mRNA decay. The sequence is that of Ribonuclease Y from Malacoplasma penetrans (strain HF-2) (Mycoplasma penetrans).